Here is a 64-residue protein sequence, read N- to C-terminus: Large ribosomal subunit protein bL35 (64 aa).

The tract at residues 1-55 (MPKMKSNKSVAARFKLTGSGQLKRTRPGKRHKLSKRSSQQKRNLSKQPLVDQGQV) is disordered. Positions 23 to 39 (KRTRPGKRHKLSKRSSQ) are enriched in basic residues.

This sequence belongs to the bacterial ribosomal protein bL35 family.

This chain is Large ribosomal subunit protein bL35, found in Chlamydia muridarum (strain MoPn / Nigg).